Reading from the N-terminus, the 221-residue chain is uncharacterized protein (221 aa).

Residues 1–11 are compositionally biased toward basic residues; it reads MGEKSRRKGPA. Disordered stretches follow at residues 1–23 and 139–169; these read MGEKSRRKGPAPRHADGKLGRTC and SNFQESSPLPHKHERKDKRSTPEEEGRSAPE. Basic and acidic residues-rich tracts occupy residues 13-23 and 155-168; these read RHADGKLGRTC and DKRSTPEEEGRSAP.

This is an uncharacterized protein from Homo sapiens (Human).